A 245-amino-acid chain; its full sequence is Thioredoxin-like 1-2, chloroplastic (245 aa).

The N-terminal 92 residues, methionine 1–serine 92, are a transit peptide targeting the chloroplast. A Thioredoxin domain is found at alanine 93–serine 194. Active-site nucleophile residues include cysteine 117 and cysteine 120. Cysteine 117 and cysteine 120 form a disulfide bridge.

The protein belongs to the thioredoxin family.

Its subcellular location is the plastid. The protein localises to the chloroplast. Its function is as follows. Probable thiol-disulfide oxidoreductase that may participate in various redox reactions. This Arabidopsis thaliana (Mouse-ear cress) protein is Thioredoxin-like 1-2, chloroplastic.